The chain runs to 237 residues: Large ribosomal subunit protein uL1 (237 aa).

It belongs to the universal ribosomal protein uL1 family. As to quaternary structure, part of the 50S ribosomal subunit.

Its function is as follows. Binds directly to 23S rRNA. The L1 stalk is quite mobile in the ribosome, and is involved in E site tRNA release. Functionally, protein L1 is also a translational repressor protein, it controls the translation of the L11 operon by binding to its mRNA. The chain is Large ribosomal subunit protein uL1 from Dehalococcoides mccartyi (strain ATCC BAA-2100 / JCM 16839 / KCTC 5957 / BAV1).